We begin with the raw amino-acid sequence, 972 residues long: Isoleucine--tRNA ligase (972 aa).

A 'HIGH' region motif is present at residues 63 to 73; it reads PYANGNIHIGH. E603 provides a ligand contact to L-isoleucyl-5'-AMP. The 'KMSKS' region signature appears at 644–648; it reads KMSKS. An ATP-binding site is contributed by K647.

The protein belongs to the class-I aminoacyl-tRNA synthetase family. IleS type 1 subfamily. As to quaternary structure, monomer.

The protein localises to the cytoplasm. The catalysed reaction is tRNA(Ile) + L-isoleucine + ATP = L-isoleucyl-tRNA(Ile) + AMP + diphosphate. Catalyzes the attachment of isoleucine to tRNA(Ile). As IleRS can inadvertently accommodate and process structurally similar amino acids such as valine, to avoid such errors it has two additional distinct tRNA(Ile)-dependent editing activities. One activity is designated as 'pretransfer' editing and involves the hydrolysis of activated Val-AMP. The other activity is designated 'posttransfer' editing and involves deacylation of mischarged Val-tRNA(Ile). The polypeptide is Isoleucine--tRNA ligase (Brucella abortus (strain 2308)).